The primary structure comprises 439 residues: Glutamate-1-semialdehyde 2,1-aminomutase (439 aa).

N6-(pyridoxal phosphate)lysine is present on Lys273.

It belongs to the class-III pyridoxal-phosphate-dependent aminotransferase family. HemL subfamily. As to quaternary structure, homodimer. Requires pyridoxal 5'-phosphate as cofactor.

It is found in the cytoplasm. It catalyses the reaction (S)-4-amino-5-oxopentanoate = 5-aminolevulinate. It functions in the pathway porphyrin-containing compound metabolism; protoporphyrin-IX biosynthesis; 5-aminolevulinate from L-glutamyl-tRNA(Glu): step 2/2. This chain is Glutamate-1-semialdehyde 2,1-aminomutase, found in Paenarthrobacter aurescens (strain TC1).